We begin with the raw amino-acid sequence, 207 residues long: Small ribosomal subunit protein uS4c (207 aa).

In terms of domain architecture, S4 RNA-binding spans 92-155 (MRLDNILFRL…TYQSILSKRI (64 aa)).

This sequence belongs to the universal ribosomal protein uS4 family. As to quaternary structure, part of the 30S ribosomal subunit. Contacts protein S5. The interaction surface between S4 and S5 is involved in control of translational fidelity.

The protein localises to the plastid. Its subcellular location is the chloroplast. One of the primary rRNA binding proteins, it binds directly to 16S rRNA where it nucleates assembly of the body of the 30S subunit. In terms of biological role, with S5 and S12 plays an important role in translational accuracy. The sequence is that of Small ribosomal subunit protein uS4c (rps4) from Equisetum giganteum (Giant horsetail).